The sequence spans 207 residues: MRRSKTAAPWPGTIVPRAFFNRMATEVAPQLLNKILAAADGRAGRIVEVEAYAGALDPAAHTYRGKTPRNATMFGAPGHFYVYFTYGMHWCCNCVCGPDGAGTGVLIRALEPLHGLEQMRAARPPRTRDRDLCRGPARLTQAMGIGGAQDGVDLVGAREGFAIVDDGMAPPADLAGGPRIGIRVGQDLPWRWSVPGNRYVSGAAPRI.

This sequence belongs to the DNA glycosylase MPG family.

In Burkholderia orbicola (strain MC0-3), this protein is Putative 3-methyladenine DNA glycosylase.